Consider the following 188-residue polypeptide: Peptidyl-tRNA hydrolase (188 aa).

Position 14 (Tyr14) interacts with tRNA. His19 acts as the Proton acceptor in catalysis. 3 residues coordinate tRNA: Tyr64, Asn66, and Asn112.

This sequence belongs to the PTH family. Monomer.

The protein resides in the cytoplasm. It carries out the reaction an N-acyl-L-alpha-aminoacyl-tRNA + H2O = an N-acyl-L-amino acid + a tRNA + H(+). Functionally, hydrolyzes ribosome-free peptidyl-tRNAs (with 1 or more amino acids incorporated), which drop off the ribosome during protein synthesis, or as a result of ribosome stalling. In terms of biological role, catalyzes the release of premature peptidyl moieties from peptidyl-tRNA molecules trapped in stalled 50S ribosomal subunits, and thus maintains levels of free tRNAs and 50S ribosomes. The polypeptide is Peptidyl-tRNA hydrolase (Leuconostoc mesenteroides subsp. mesenteroides (strain ATCC 8293 / DSM 20343 / BCRC 11652 / CCM 1803 / JCM 6124 / NCDO 523 / NBRC 100496 / NCIMB 8023 / NCTC 12954 / NRRL B-1118 / 37Y)).